We begin with the raw amino-acid sequence, 820 residues long: MSDTRRRVKVYTLNEDRQWDDRGTGHVSSTYVERLKGMSLLVRAESDGSLLLESKINPNTAYQKQQDTLIVWSEAENYDLALSFQEKAGCDEIWEKICQVQGKDPSVEVTQDPIDESEEERFEEMPETSNLIDLPTCELSKLEEIADLVTSVLSSPIRREKLALALENEGYIKKLLQLFQTCENLDNTEGLHHLYEIIRGILFLNKAALFEVMFSDECIMDVVGCLEYDPALAQPKRHREFLTKTAKFKEVIPITDSELRQKIHQTYRVQYIQDVILPTPSVFEENFLSTLTSFIFFNKVEIVSMLQEDEKFLSEVFAQLTDEATDDDKRRELVNFFKEFCAFSQTLQPQNRDAFFKTLANLGILPALEIVMGMDDLQVRAAATDIFSYLVEFSPSMVREFVMQEAQQSDDDILLINVVIEQMICDSDPELGGAVQLMGLLRTLIDPENMLATANKTEKSEFLNFFYNHCMHVLTAPLLANTSEDKLEKDAVLGSIKTSTVCPDNYQTAQLLALILELLTFCVEHHTYHIKNYIMNKDLLRRVLILMNSKHTFLALCALRFMRRIIGLKDEFYNRYIIKGNLFEPVINALLDNGTRYNLLNSAIIELFEFIRVEDIKSLTSHIVENFYKALESIEYVQTFKGLKTRYEQEKDRQSQKLSSVPSILRSNRFRRDARALEDDEELWFNEDEEEEGEAVVPPVEKTKTEDDFPEGYEKFLETKKAKELEDKENLPKRTSVGGFKFTFSHSVSAANGANSTNSKSVAAHTPPASSNGSSSKNTSLTTTVASAKGSLIGLVDYPDDEDEEEEEDTSPRKRPRLGS.

The WH1 domain maps to 1–100 (MSDTRRRVKV…DEIWEKICQV (100 aa)). Disordered regions lie at residues 687-711 (EDEE…DFPE) and 750-820 (AANG…RLGS). Residues 701 to 711 (EKTKTEDDFPE) show a composition bias toward basic and acidic residues. The segment covering 750–761 (AANGANSTNSKS) has biased composition (polar residues). Over residues 770–784 (SSNGSSSKNTSLTTT) the composition is skewed to low complexity. The segment covering 798–809 (YPDDEDEEEEED) has biased composition (acidic residues).

This sequence belongs to the SMEK family. As to quaternary structure, serine/threonine-protein phosphatase 4 (PP4) occurs in different assemblies of the catalytic and one or more regulatory subunits.

Functionally, regulatory subunit of serine/threonine-protein phosphatase 4 (PP4). In Xenopus tropicalis (Western clawed frog), this protein is Serine/threonine-protein phosphatase 4 regulatory subunit 3.